A 403-amino-acid chain; its full sequence is Zinc finger CCHC domain-containing protein 3 (403 aa).

Residues 1–158 (MATGGGAEEE…PLQDEPAAAA (158 aa)) are disordered. Composition is skewed to basic and acidic residues over residues 26 to 38 (ARGE…REKM) and 47 to 65 (LAEK…REEE). A compositionally biased stretch (gly residues) spans 67–79 (GGGGGSAGLGGPA). A compositionally biased stretch (basic and acidic residues) spans 95-121 (GDPKGRRRDPAGEAVDPRKKKGAAEAG). Over residues 128–139 (AAAAAMATPARP) the composition is skewed to low complexity. A Phosphotyrosine modification is found at Tyr201. 3 consecutive CCHC-type zinc fingers follow at residues 335–350 (CFKC…SCTQ), 352–368 (RCFR…YCRK), and 372–387 (CNLC…QCPK).

As to quaternary structure, interacts with CGAS. Interacts with RIGI. Interacts with IFIH1/MDA5.

Its subcellular location is the cytoplasm. Nucleic acid-binding protein involved in innate immune response to DNA and RNA viruses. Binds DNA and RNA in the cytoplasm and acts by promoting recognition of viral nucleic acids by virus sensors, such as RIGI, IFIH1/MDA5 and CGAS. Acts as a co-sensor for recognition of double-stranded DNA (dsDNA) by cGAS in the cytoplasm, thereby playing a role in innate immune response to cytosolic dsDNA and DNA virus. Binds dsDNA and probably acts by promoting sensing of dsDNA by CGAS, leading to enhance CGAS oligomerization and activation. Promotes sensing of viral RNA by RIGI-like receptors proteins RIGI and IFIH1/MDA5 via two mechanisms: binds double-stranded RNA (dsRNA), enhancing the binding of RIGI and IFIH1/MDA5 to dsRNA and promotes 'Lys-63'-linked ubiquitination and subsequent activation of RIGI and IFIH1/MDA5. The sequence is that of Zinc finger CCHC domain-containing protein 3 from Homo sapiens (Human).